A 259-amino-acid polypeptide reads, in one-letter code: Putative carbamate hydrolase RutD (259 aa).

Belongs to the AB hydrolase superfamily. Hydrolase RutD family.

It carries out the reaction carbamate + 2 H(+) = NH4(+) + CO2. Functionally, involved in pyrimidine catabolism. May facilitate the hydrolysis of carbamate, a reaction that can also occur spontaneously. This Pseudomonas savastanoi pv. phaseolicola (strain 1448A / Race 6) (Pseudomonas syringae pv. phaseolicola (strain 1448A / Race 6)) protein is Putative carbamate hydrolase RutD.